The primary structure comprises 115 residues: uncharacterized protein (115 aa).

A disordered region spans residues 1-115 (MGETWFLTPN…ARSPERTPSP (115 aa)). Polar residues predominate over residues 7-17 (LTPNGQSSPGS). Low complexity-rich tracts occupy residues 60 to 70 (ASCAPRATPRR) and 91 to 107 (SASAPAGPASSAPWPAR).

This is an uncharacterized protein from Human adenovirus C serotype 2 (HAdV-2).